Reading from the N-terminus, the 412-residue chain is G-protein coupled receptor homolog UL33 (412 aa).

Residues 1–35 (MDTIIHNTTNRSTDTPHVNITCNITEPLSAIRTTE) lie on the Virion surface side of the membrane. 3 N-linked (GlcNAc...) asparagine; by host glycosylation sites follow: N7, N19, and N23. A helical membrane pass occupies residues 36 to 56 (AVINTFIIFVGGPLNAIVLIT). Topologically, residues 57–80 (QLLTNRVLGYSTPTIYMTNLYSTN) are intravirion. The helical transmembrane segment at 81-101 (FLTLTVLPFIVLSNQWLLPAS) threads the bilayer. Over 102-106 (VASCK) the chain is Virion surface. C105 and C188 are joined by a disulfide. Residues 107-127 (FLSVIYYSSCTVGFATVALIA) traverse the membrane as a helical segment. The Intravirion segment spans residues 128–147 (ADRYRVLHKRTYARQSYRST). Residues 148–168 (YIILLLTWFAGLIFSMPAAVY) form a helical membrane-spanning segment. Over 169-206 (TTVVIHNGTNGQSSNGHATCVLYFIADEVYTVLLSWKV) the chain is Virion surface. The chain crosses the membrane as a helical span at residues 207-227 (LLTLVWGAAPVIMMTWFYAFF). Residues 228–244 (YSTVQRASQKQRSRTLT) lie on the Intravirion side of the membrane. Residues 245–265 (FVSVLLISFVALQTPYVSIMI) traverse the membrane as a helical segment. The Virion surface segment spans residues 266-292 (FNSYATAAWPMDCEHLTLRRTIGTLSR). The chain crosses the membrane as a helical span at residues 293 to 313 (LVPHLHCLINPILYALLGHDF). Topologically, residues 314-412 (LQRMRQCFRG…SQSHHNLSGV (99 aa)) are intravirion. Residues 377-412 (NFPSGTWKGGQKTASNDTSTKIPHRLSQSHHNLSGV) are disordered. Positions 388 to 397 (KTASNDTSTK) are enriched in polar residues.

This sequence belongs to the G-protein coupled receptor 1 family. In terms of assembly, heterodimerizes with US28.

It localises to the virion. The protein resides in the host cell membrane. Its subcellular location is the host cytoplasm. Functionally, G-protein-coupled receptor (vGPCR) that constitutively activates multiple oncogenic signaling pathways including STAT3, AP-1, phospholipase C, NF-kappa-B or cAMP-responsive element (CRE) pathways. Plays an important role in viral reactivation from latency through activation of host CREB1, facilitating its recruitment to the viral major immediate early (MIE) genes. In turn, expression of the MIE-driven genes such as UL123 are de-repressed. Also facilitates virus dissemination via the extracellular and cell-to-cell route. The sequence is that of G-protein coupled receptor homolog UL33 (UL33) from Human cytomegalovirus (strain Merlin) (HHV-5).